Here is a 372-residue protein sequence, read N- to C-terminus: NAD(P)H-quinone oxidoreductase subunit 1 (372 aa).

The next 8 membrane-spanning stretches (helical) occupy residues 31–51 (PLPM…VVWL), 65–85 (PEFI…KLVL), 97–117 (LLFT…YLIL), 128–148 (VGLG…GLLM), 176–196 (LALS…VDIV), 254–276 (FALF…AVLY), 304–324 (LIFA…LIFL), and 347–367 (FLLP…LAFP).

It belongs to the complex I subunit 1 family. As to quaternary structure, NDH-1 is composed of at least 11 different subunits.

Its subcellular location is the cellular thylakoid membrane. The enzyme catalyses a plastoquinone + NADH + (n+1) H(+)(in) = a plastoquinol + NAD(+) + n H(+)(out). It catalyses the reaction a plastoquinone + NADPH + (n+1) H(+)(in) = a plastoquinol + NADP(+) + n H(+)(out). In terms of biological role, NDH-1 shuttles electrons from an unknown electron donor, via FMN and iron-sulfur (Fe-S) centers, to quinones in the respiratory and/or the photosynthetic chain. The immediate electron acceptor for the enzyme in this species is believed to be plastoquinone. Couples the redox reaction to proton translocation, and thus conserves the redox energy in a proton gradient. The protein is NAD(P)H-quinone oxidoreductase subunit 1 of Leptolyngbya boryana (Plectonema boryanum).